Reading from the N-terminus, the 600-residue chain is Long-chain-fatty-acid--CoA ligase FadD15 (600 aa).

It belongs to the ATP-dependent AMP-binding enzyme family.

The catalysed reaction is a long-chain fatty acid + ATP + CoA = a long-chain fatty acyl-CoA + AMP + diphosphate. The protein operates within lipid metabolism; fatty acid biosynthesis. Its function is as follows. Catalyzes the activation of long-chain fatty acids as acyl-coenzyme A (acyl-CoA), which are then transferred to the multifunctional polyketide synthase (PKS) type III for further chain extension. This is Long-chain-fatty-acid--CoA ligase FadD15 (fadD15) from Mycobacterium bovis (strain ATCC BAA-935 / AF2122/97).